The sequence spans 68 residues: Small ribosomal subunit protein eS17 (68 aa).

This sequence belongs to the eukaryotic ribosomal protein eS17 family.

In Staphylothermus marinus (strain ATCC 43588 / DSM 3639 / JCM 9404 / F1), this protein is Small ribosomal subunit protein eS17.